A 103-amino-acid chain; its full sequence is Large ribosomal subunit protein bL21 (103 aa).

This sequence belongs to the bacterial ribosomal protein bL21 family. As to quaternary structure, part of the 50S ribosomal subunit. Contacts protein L20.

In terms of biological role, this protein binds to 23S rRNA in the presence of protein L20. This is Large ribosomal subunit protein bL21 from Acinetobacter baumannii (strain AB307-0294).